Reading from the N-terminus, the 1427-residue chain is DNA-directed RNA polymerase subunit beta' (1427 aa).

Positions 66, 68, 81, and 84 each coordinate Zn(2+). The Mg(2+) site is built by D472, D474, and D476. Zn(2+)-binding residues include C815, C889, C896, and C899.

Belongs to the RNA polymerase beta' chain family. The RNAP catalytic core consists of 2 alpha, 1 beta, 1 beta' and 1 omega subunit. When a sigma factor is associated with the core the holoenzyme is formed, which can initiate transcription. Requires Mg(2+) as cofactor. Zn(2+) serves as cofactor.

The catalysed reaction is RNA(n) + a ribonucleoside 5'-triphosphate = RNA(n+1) + diphosphate. In terms of biological role, DNA-dependent RNA polymerase catalyzes the transcription of DNA into RNA using the four ribonucleoside triphosphates as substrates. The sequence is that of DNA-directed RNA polymerase subunit beta' from Bacteroides fragilis (strain ATCC 25285 / DSM 2151 / CCUG 4856 / JCM 11019 / LMG 10263 / NCTC 9343 / Onslow / VPI 2553 / EN-2).